Consider the following 138-residue polypeptide: Gamma-glutamylaminecyclotransferase (138 aa).

The active-site Proton acceptor is Glu63.

This sequence belongs to the gamma-glutamylcyclotransferase family.

It catalyses the reaction epsilon-(gamma-L-glutamyl)-L-lysine = 5-oxo-L-proline + L-lysine. Its function is as follows. May contribute to degradation of proteins cross-linked by transglutaminases by degrading the cross-link between a lysine and a glutamic acid residue. Catalyzes the formation of 5-oxo-L-proline from L-gamma-glutamyl-L-epsilon-lysine. The chain is Gamma-glutamylaminecyclotransferase (ggact) from Xenopus laevis (African clawed frog).